The primary structure comprises 243 residues: Probable transcriptional regulatory protein Athe_0816 (243 aa).

The protein belongs to the TACO1 family.

Its subcellular location is the cytoplasm. The polypeptide is Probable transcriptional regulatory protein Athe_0816 (Caldicellulosiruptor bescii (strain ATCC BAA-1888 / DSM 6725 / KCTC 15123 / Z-1320) (Anaerocellum thermophilum)).